The sequence spans 457 residues: Vasoactive intestinal polypeptide receptor 1 (457 aa).

An N-terminal signal peptide occupies residues 1-30 (MRPPSPLPARWLCVLAGALAWALGPAGGQA). Residues 31–141 (ARLQEECDYV…DEQQTMFYGS (111 aa)) are Extracellular-facing. Disulfide bonds link C37–C208, C50–C72, C63–C105, C86–C122, and C215–C285. N58, N69, and N100 each carry an N-linked (GlcNAc...) asparagine glycan. Residues 142-166 (VKTGYTIGYGLSLATLLVATAILSL) traverse the membrane as a helical segment. The Cytoplasmic segment spans residues 167 to 174 (FRKLHCTR). A helical membrane pass occupies residues 175–196 (NYIHMHLFISFILRAAAVFIKD). Residues 197–216 (LALFDSGESDQCSEGSVGCK) are Extracellular-facing. Residues 217–241 (AAMVFFQYCVMANFFWLLVEGLYLY) form a helical membrane-spanning segment. Residues 242–254 (TLLAVSFFSERKY) are Cytoplasmic-facing. Residues 255-276 (FWGYILIGWGVPSTFTMVWTIA) form a helical membrane-spanning segment. Residues 277-291 (RIHFEDYGCWDTINS) are Extracellular-facing. N-linked (GlcNAc...) asparagine glycosylation is present at N290. Residues 292–316 (SLWWIIKGPILTSILVNFILFICII) form a helical membrane-spanning segment. The Cytoplasmic portion of the chain corresponds to 317-338 (RILLQKLRPPDIRKSDSSPYSR). Residues 339 to 359 (LARSTLLLIPLFGVHYIMFAF) traverse the membrane as a helical segment. Residues 360 to 367 (FPDNFKPE) are Extracellular-facing. The helical transmembrane segment at 368–391 (VKMVFELVVGSFQGFVVAILYCFL) threads the bilayer. Over 392–457 (NGEVQAELRR…SSFQAEVSLV (66 aa)) the chain is Cytoplasmic.

This sequence belongs to the G-protein coupled receptor 2 family. In terms of assembly, interacts with ADCYAP1/PACAP; activated by both PACAP27 and PACAP38 neuropeptides. Interacts with VIP; the interaction results in VIPR1 activation. In lung, HT-29 colonic epithelial cells, Raji B-lymphoblasts. Lesser extent in brain, heart, kidney, liver and placenta. Not expressed in CD4+ or CD8+ T-cells. Expressed in the T-cell lines HARRIS, HuT 78, Jurkat and SUP-T1, but not in the T-cell lines Peer, MOLT-4, HSB and YT.

The protein resides in the cell membrane. In terms of biological role, g protein-coupled receptor activated by the neuropeptides vasoactive intestinal peptide (VIP) and pituitary adenylate cyclase-activating polypeptide (ADCYAP1/PACAP). Binds VIP and both PACAP27 and PACAP38 bioactive peptides with the following order of ligand affinity VIP = PACAP27 &gt; PACAP38. Ligand binding causes a conformation change that triggers signaling via guanine nucleotide-binding proteins (G proteins) and modulates the activity of downstream effectors. Activates cAMP-dependent pathway. The polypeptide is Vasoactive intestinal polypeptide receptor 1 (Homo sapiens (Human)).